We begin with the raw amino-acid sequence, 1863 residues long: Breast cancer type 1 susceptibility protein homolog (1863 aa).

Met-1 is subject to N-acetylmethionine. An RING-type zinc finger spans residues 24–65 (CPICLELIKEPVSTKCDHIFCKFCMLKLLNQKKGPSQCPLCK). Residue Lys-109 forms a Glycyl lysine isopeptide (Lys-Gly) (interchain with G-Cter in SUMO2) linkage. Position 114 is a phosphoserine (Ser-114). Residues 231 to 267 (TDVTNTEHHQPSNNDLNTTEKRATERHPEKYQGSSVS) form a disordered region. The span at 248 to 260 (TTEKRATERHPEK) shows a compositional bias: basic and acidic residues. Lys-301 participates in a covalent cross-link: Glycyl lysine isopeptide (Lys-Gly) (interchain with G-Cter in SUMO2). The segment at 306-338 (NKSKQPGLARSQHNRWAGSKETCNDRQTPSTEK) is disordered. A Glycyl lysine isopeptide (Lys-Gly) (interchain with G-Cter in SUMO2) cross-link involves residue Lys-339. Ser-395, Ser-398, Ser-423, and Ser-434 each carry phosphoserine. Residues Lys-443, Lys-459, and Lys-519 each participate in a glycyl lysine isopeptide (Lys-Gly) (interchain with G-Cter in SUMO2) cross-link. Position 551 is a phosphoserine (Ser-551). Glycyl lysine isopeptide (Lys-Gly) (interchain with G-Cter in SUMO2) cross-links involve residues Lys-583 and Lys-654. A disordered region spans residues 650 to 735 (IKKKKYNQMP…LPREEKEEKL (86 aa)). Ser-694, Ser-708, and Ser-725 each carry phosphoserine. Polar residues predominate over residues 705–716 (APGSFTNCSNTS). Glycyl lysine isopeptide (Lys-Gly) (interchain with G-Cter in SUMO2) cross-links involve residues Lys-734 and Lys-739. Phosphoserine occurs at positions 753 and 840. Glycyl lysine isopeptide (Lys-Gly) (interchain with G-Cter in SUMO2) cross-links involve residues Lys-918 and Lys-987. The residue at position 988 (Ser-988) is a Phosphoserine; by CHEK2. Ser-1009 bears the Phosphoserine mark. The segment at 1045–1066 (NEVGSSTNEVGSSINEVGSSDE) is disordered. Lys-1079 is covalently cross-linked (Glycyl lysine isopeptide (Lys-Gly) (interchain with G-Cter in SUMO2)). 11 positions are modified to phosphoserine: Ser-1143, Ser-1189, Ser-1191, Ser-1211, Ser-1217, Ser-1218, Ser-1280, Ser-1328, Ser-1336, Ser-1342, and Ser-1387. The disordered stretch occupies residues 1181–1216 (VQRGELSRSPSPFTHTHLAQGYRRGAKKLESSEENL). Positions 1322-1394 (KQMRHQSESQ…LSSQSDILTT (73 aa)) are disordered. The span at 1342 to 1360 (SDDEERGTDLEENNQEEQG) shows a compositional bias: acidic residues. Over residues 1373 to 1394 (ESETSVSEDCSGLSSQSDILTT) the composition is skewed to polar residues. Thr-1394 is subject to Phosphothreonine. Residues 1397–1424 (RDTMQDNLIKLQQEMAELEAVLEQHGSQ) are interaction with PALB2. A phosphoserine mark is found at Ser-1423, Ser-1457, Ser-1524, and Ser-1542. The segment at 1440–1504 (EDLRNPEQST…RSSPSKCPSL (65 aa)) is disordered. A compositionally biased stretch (polar residues) spans 1445-1470 (PEQSTSEKAVLTSQKSSEYPISQNPE). 2 disordered regions span residues 1540-1597 (EESG…PSST) and 1610-1642 (SAQSPAAAQTTNTAGYNAMEESVSREKPELTAS). Polar residues predominate over residues 1610-1624 (SAQSPAAAQTTNTAG). 2 consecutive BRCT domains span residues 1642–1736 (STER…DFEV) and 1756–1855 (QDRK…TYLI).

In terms of assembly, heterodimer with BARD1. Part of the BRCA1-associated genome surveillance complex (BASC), which contains BRCA1, MSH2, MSH6, MLH1, ATM, BLM, PMS2 and the MRE11-RAD50-NBN protein (MRN) complex. This association could be a dynamic process changing throughout the cell cycle and within subnuclear domains. Component of the BRCA1-A complex, at least composed of BRCA1, BARD1, UIMC1/RAP80, ABRAXAS1, BRCC3/BRCC36, BABAM2 and BABAM1/NBA1. Interacts (via the BRCT domains) with ABRAXAS1 (phosphorylated form); this is important for recruitment to sites of DNA damage. Can form a heterotetramer with two molecules of ABRAXAS1 (phosphorylated form). Component of the BRCA1-RBBP8 complex. Interacts (via the BRCT domains) with RBBP8 ('Ser-327' phosphorylated form); the interaction ubiquitinates RBBP8, regulates CHEK1 activation, and involves RBBP8 in BRCA1-dependent G2/M checkpoint control on DNA damage. Associates with RNA polymerase II holoenzyme. Interacts with SMC1A, NELFB, DCLRE1C, CLSPN. CHEK1, CHEK2, BAP1, BRCC3, UBXN1 and PCLAF. Interacts (via BRCT domains) with BRIP1 (phosphorylated form). Interacts with FANCD2 (ubiquitinated form). Interacts with H2AX (phosphorylated on 'Ser-140'). Interacts (via the BRCT domains) with ACACA (phosphorylated form); the interaction prevents dephosphorylation of ACACA. Part of a BRCA complex containing BRCA1, BRCA2 and PALB2. Interacts directly with PALB2; the interaction is essential for its function in HRR. Interacts directly with BRCA2; the interaction occurs only in the presence of PALB2 which serves as the bridging protein. Interacts (via the BRCT domains) with LMO4; the interaction represses the transcriptional activity of BRCA1. Interacts (via the BRCT domains) with CCAR2 (via N-terminus); the interaction represses the transcriptional activator activity of BRCA1. Interacts with EXD2. Interacts (via C-terminus) with DHX9; this interaction is direct and links BRCA1 to the RNA polymerase II holoenzyme. Interacts with DNA helicase ZGRF1; the interaction is increased following DNA damage induction. Phosphorylated in response to IR, UV, and various stimuli that cause checkpoint activation, probably by ATM or ATR. Phosphorylation at Ser-988 by CHEK2 regulates mitotic spindle assembly. Phosphorylation by AURKA regulates centrosomal microtubule nucleation. In terms of processing, autoubiquitinated, undergoes 'Lys-6'-linked polyubiquitination. 'Lys-6'-linked polyubiquitination does not promote degradation.

The protein localises to the nucleus. Its subcellular location is the chromosome. It is found in the cytoplasm. It carries out the reaction S-ubiquitinyl-[E2 ubiquitin-conjugating enzyme]-L-cysteine + [acceptor protein]-L-lysine = [E2 ubiquitin-conjugating enzyme]-L-cysteine + N(6)-ubiquitinyl-[acceptor protein]-L-lysine.. Its pathway is protein modification; protein ubiquitination. Functionally, E3 ubiquitin-protein ligase that specifically mediates the formation of 'Lys-6'-linked polyubiquitin chains and plays a central role in DNA repair by facilitating cellular responses to DNA damage. It is unclear whether it also mediates the formation of other types of polyubiquitin chains. The BRCA1-BARD1 heterodimer coordinates a diverse range of cellular pathways such as DNA damage repair, ubiquitination and transcriptional regulation to maintain genomic stability. Regulates centrosomal microtubule nucleation. Required for appropriate cell cycle arrests after ionizing irradiation in both the S-phase and the G2 phase of the cell cycle. Required for FANCD2 targeting to sites of DNA damage. Inhibits lipid synthesis by binding to inactive phosphorylated ACACA and preventing its dephosphorylation. Contributes to homologous recombination repair (HRR) via its direct interaction with PALB2, fine-tunes recombinational repair partly through its modulatory role in the PALB2-dependent loading of BRCA2-RAD51 repair machinery at DNA breaks. Component of the BRCA1-RBBP8 complex which regulates CHEK1 activation and controls cell cycle G2/M checkpoints on DNA damage via BRCA1-mediated ubiquitination of RBBP8. Acts as a transcriptional activator. The polypeptide is Breast cancer type 1 susceptibility protein homolog (BRCA1) (Pongo pygmaeus (Bornean orangutan)).